A 426-amino-acid chain; its full sequence is Glutamyl-tRNA reductase (426 aa).

Residues 49–52, Ser101, 106–108, and Gln112 each bind substrate; these read TCNR and EPQ. The Nucleophile role is filled by Cys50. Position 181–186 (181–186) interacts with NADP(+); sequence GAGETI. A disordered region spans residues 405 to 426; that stretch reads RLFPEKPGYQHPPHSYPDREDR.

It belongs to the glutamyl-tRNA reductase family. As to quaternary structure, homodimer.

The catalysed reaction is (S)-4-amino-5-oxopentanoate + tRNA(Glu) + NADP(+) = L-glutamyl-tRNA(Glu) + NADPH + H(+). It functions in the pathway porphyrin-containing compound metabolism; protoporphyrin-IX biosynthesis; 5-aminolevulinate from L-glutamyl-tRNA(Glu): step 1/2. Catalyzes the NADPH-dependent reduction of glutamyl-tRNA(Glu) to glutamate 1-semialdehyde (GSA). The chain is Glutamyl-tRNA reductase from Xanthomonas axonopodis pv. citri (strain 306).